Here is a 390-residue protein sequence, read N- to C-terminus: Odorant receptor 85b (390 aa).

The Cytoplasmic segment spans residues M1–K30. Residues L31–E51 traverse the membrane as a helical segment. Over S52 to E66 the chain is Extracellular. The helical transmembrane segment at A67 to I87 threads the bilayer. Residues R88–R126 lie on the Cytoplasmic side of the membrane. The helical transmembrane segment at I127–V147 threads the bilayer. Topologically, residues M148–Q200 are extracellular. N-linked (GlcNAc...) asparagine glycosylation is present at N179. A helical transmembrane segment spans residues I201–L221. Residues S222–D260 lie on the Cytoplasmic side of the membrane. Residues I261 to G281 form a helical membrane-spanning segment. Over F282–D291 the chain is Extracellular. The helical transmembrane segment at I292–H312 threads the bilayer. Over Y313–T360 the chain is Cytoplasmic. Residues I361–F381 traverse the membrane as a helical segment. The Extracellular portion of the chain corresponds to A382–Q390.

The protein belongs to the insect chemoreceptor superfamily. Heteromeric odorant receptor channel (TC 1.A.69) family. Or49a subfamily. In terms of assembly, interacts with Orco. Complexes exist early in the endomembrane system in olfactory sensory neurons (OSNs), coupling these complexes to the conserved ciliary trafficking pathway. Expressed in olfactory sensory neurons in the antenna.

The protein resides in the cell membrane. Its function is as follows. Odorant receptor which mediates acceptance or avoidance behavior, depending on its substrates. The odorant receptor repertoire encodes a large collection of odor stimuli that vary widely in identity, intensity, and duration. Forms a complex with Orco to form odorant-sensing units, providing sensitive and prolonged odorant signaling and calcium permeability. Involved in the behavioral responses to 2-heptanone, amyl acetate, and butyl acetate. The protein is Odorant receptor 85b (Or85b) of Drosophila melanogaster (Fruit fly).